The sequence spans 382 residues: Albumin (382 aa).

2 Albumin domains span residues Lys1 to Glu178 and Ala179 to Gln377. 12 cysteine pairs are disulfide-bonded: Cys2–Cys48, Cys47–Cys55, Cys67–Cys81, Cys80–Cys91, Cys116–Cys161, Cys160–Cys169, Cys192–Cys238, Cys237–Cys248, Cys261–Cys277, Cys276–Cys287, Cys314–Cys359, and Cys358–Cys367. Ca(2+)-binding residues include Asp51 and Glu54. Asp51 contacts Zn(2+).

It belongs to the ALB/AFP/VDB family. As to expression, plasma.

It localises to the secreted. Serum albumin, the main protein of plasma, has a good binding capacity for water, Ca(2+), Na(+), K(+), fatty acids, hormones, bilirubin and drugs. Its main function is the regulation of the colloidal osmotic pressure of blood. In Aquarana catesbeiana (American bullfrog), this protein is Albumin (ALB).